Consider the following 314-residue polypeptide: MRLRFYYIPFMRLRTYAVAVSAILVAIALISMGTRGLNFGIDFTGGALVQLEFQQPPVIEEIRSHLSAVGLGDSTIQHFGSDREILVRAPIISDESAAAMELISLIRETLSAQYGDQMDVLRIETVGPRVGGELREQGTYAILYALLAIVAYIWWRYELNFGVAAVIALVHDVVITLGIFSLAGVTFSLPVLAAILTVIGYSLNDTIVVFDRIRENLYIPEGKEKPSIISIINTSITETLSRTILTSGTTLIVVAVLYFFGGEVINGFAFTLLVGIIVGTYSSIFVASLLLVYWRPRYIEPHLKKLQEKPEEVV.

The next 6 membrane-spanning stretches (helical) occupy residues 17-37 (AVAVSAILVAIALISMGTRGL), 137-157 (QGTYAILYALLAIVAYIWWRY), 158-178 (ELNFGVAAVIALVHDVVITLG), 188-210 (SLPVLAAILTVIGYSLNDTIVVF), 250-270 (TLIVVAVLYFFGGEVINGFAF), and 272-292 (LLVGIIVGTYSSIFVASLLLV).

The protein belongs to the SecD/SecF family. SecF subfamily. Forms a complex with SecD. Part of the essential Sec protein translocation apparatus which comprises SecA, SecYEG and auxiliary proteins SecDF. Other proteins may also be involved.

Its subcellular location is the cell inner membrane. In terms of biological role, part of the Sec protein translocase complex. Interacts with the SecYEG preprotein conducting channel. SecDF uses the proton motive force (PMF) to complete protein translocation after the ATP-dependent function of SecA. The protein is Protein translocase subunit SecF of Desulfurispirillum indicum (strain ATCC BAA-1389 / DSM 22839 / S5).